The sequence spans 511 residues: 2-isopropylmalate synthase (511 aa).

The region spanning 5–267 (IQIFDTTLRD…ESQINLEETK (263 aa)) is the Pyruvate carboxyltransferase domain. Aspartate 14, histidine 202, histidine 204, and asparagine 238 together coordinate Mn(2+). Residues 391–511 (QLDNLQLQYV…EYELKEGIRT (121 aa)) form a regulatory domain region.

Belongs to the alpha-IPM synthase/homocitrate synthase family. LeuA type 1 subfamily. In terms of assembly, homodimer. The cofactor is Mn(2+).

Its subcellular location is the cytoplasm. The catalysed reaction is 3-methyl-2-oxobutanoate + acetyl-CoA + H2O = (2S)-2-isopropylmalate + CoA + H(+). It functions in the pathway amino-acid biosynthesis; L-leucine biosynthesis; L-leucine from 3-methyl-2-oxobutanoate: step 1/4. Catalyzes the condensation of the acetyl group of acetyl-CoA with 3-methyl-2-oxobutanoate (2-ketoisovalerate) to form 3-carboxy-3-hydroxy-4-methylpentanoate (2-isopropylmalate). The chain is 2-isopropylmalate synthase from Staphylococcus epidermidis (strain ATCC 35984 / DSM 28319 / BCRC 17069 / CCUG 31568 / BM 3577 / RP62A).